The primary structure comprises 329 residues: Lipoyl synthase (329 aa).

Residues 1 to 23 are disordered; the sequence is MTDLTATPAPAEPAASAYDPTAK. [4Fe-4S] cluster-binding residues include Cys76, Cys81, Cys87, Cys102, Cys106, Cys109, and Ser316. The Radical SAM core domain maps to 87-305; that stretch reads CFGKGTATFM…EEEAYKMGFT (219 aa).

Belongs to the radical SAM superfamily. Lipoyl synthase family. [4Fe-4S] cluster serves as cofactor.

It localises to the cytoplasm. The catalysed reaction is [[Fe-S] cluster scaffold protein carrying a second [4Fe-4S](2+) cluster] + N(6)-octanoyl-L-lysyl-[protein] + 2 oxidized [2Fe-2S]-[ferredoxin] + 2 S-adenosyl-L-methionine + 4 H(+) = [[Fe-S] cluster scaffold protein] + N(6)-[(R)-dihydrolipoyl]-L-lysyl-[protein] + 4 Fe(3+) + 2 hydrogen sulfide + 2 5'-deoxyadenosine + 2 L-methionine + 2 reduced [2Fe-2S]-[ferredoxin]. It participates in protein modification; protein lipoylation via endogenous pathway; protein N(6)-(lipoyl)lysine from octanoyl-[acyl-carrier-protein]: step 2/2. Its function is as follows. Catalyzes the radical-mediated insertion of two sulfur atoms into the C-6 and C-8 positions of the octanoyl moiety bound to the lipoyl domains of lipoate-dependent enzymes, thereby converting the octanoylated domains into lipoylated derivatives. This is Lipoyl synthase from Burkholderia mallei (strain NCTC 10247).